The following is a 67-amino-acid chain: Gene 51 protein (67 aa).

In Mycobacterium (Mycobacteriophage L5), this protein is Gene 51 protein (51).